The sequence spans 189 residues: Elongation factor P (189 aa).

It belongs to the elongation factor P family.

Its subcellular location is the cytoplasm. It functions in the pathway protein biosynthesis; polypeptide chain elongation. Involved in peptide bond synthesis. Stimulates efficient translation and peptide-bond synthesis on native or reconstituted 70S ribosomes in vitro. Probably functions indirectly by altering the affinity of the ribosome for aminoacyl-tRNA, thus increasing their reactivity as acceptors for peptidyl transferase. This Xanthobacter autotrophicus (strain ATCC BAA-1158 / Py2) protein is Elongation factor P.